The following is a 243-amino-acid chain: uncharacterized protein (243 aa).

Residues 1–18 are compositionally biased toward low complexity; sequence MSNSHYNNYQQQQPHSSN. A disordered region spans residues 1–30; sequence MSNSHYNNYQQQQPHSSNGDPEYQHQQMVH. The AMMECR1 domain maps to 38-232; sequence GHGMKTVAVP…MHYKEYREYQ (195 aa).

This is an uncharacterized protein from Drosophila melanogaster (Fruit fly).